The primary structure comprises 245 residues: MIIPALDLIDGTVVRLHQGDYGKQRDYGNDPLPRLQDYAAQGAEVLHLVDLTGAKDPAKRQIPLIKTLVAGVNVPVQVGGGVRSEEDVAALLEAGVARVVVGSTAVKSPEMVKGWFERFGADALVLALDVRIDEQGNKQVAVSGWQENSGVSLEQLVETYLPVGLKHVLCTDISRDGTLAGSNVSLYEEVCARYPQVAFQSSGGIGDINDVAALRGTGVRSVIVGRALLEGKFTVKEAIACWQNA.

Catalysis depends on aspartate 7, which acts as the Proton acceptor. The active-site Proton donor is aspartate 129.

It belongs to the HisA/HisF family.

It is found in the cytoplasm. The enzyme catalyses 1-(5-phospho-beta-D-ribosyl)-5-[(5-phospho-beta-D-ribosylamino)methylideneamino]imidazole-4-carboxamide = 5-[(5-phospho-1-deoxy-D-ribulos-1-ylimino)methylamino]-1-(5-phospho-beta-D-ribosyl)imidazole-4-carboxamide. It functions in the pathway amino-acid biosynthesis; L-histidine biosynthesis; L-histidine from 5-phospho-alpha-D-ribose 1-diphosphate: step 4/9. This chain is 1-(5-phosphoribosyl)-5-[(5-phosphoribosylamino)methylideneamino] imidazole-4-carboxamide isomerase, found in Escherichia coli O45:K1 (strain S88 / ExPEC).